The chain runs to 178 residues: UPF0302 protein Bcer98_1244 (178 aa).

The protein belongs to the UPF0302 family.

In Bacillus cytotoxicus (strain DSM 22905 / CIP 110041 / 391-98 / NVH 391-98), this protein is UPF0302 protein Bcer98_1244.